A 426-amino-acid chain; its full sequence is Serine--tRNA ligase (426 aa).

Thr233–Glu235 contributes to the L-serine binding site. Arg264 to Glu266 contributes to the ATP binding site. Glu287 is an L-serine binding site. Glu351 to Ser354 is an ATP binding site. Ser387 is a binding site for L-serine.

It belongs to the class-II aminoacyl-tRNA synthetase family. Type-1 seryl-tRNA synthetase subfamily. As to quaternary structure, homodimer. The tRNA molecule binds across the dimer.

It is found in the cytoplasm. The catalysed reaction is tRNA(Ser) + L-serine + ATP = L-seryl-tRNA(Ser) + AMP + diphosphate + H(+). It carries out the reaction tRNA(Sec) + L-serine + ATP = L-seryl-tRNA(Sec) + AMP + diphosphate + H(+). It participates in aminoacyl-tRNA biosynthesis; selenocysteinyl-tRNA(Sec) biosynthesis; L-seryl-tRNA(Sec) from L-serine and tRNA(Sec): step 1/1. In terms of biological role, catalyzes the attachment of serine to tRNA(Ser). Is also able to aminoacylate tRNA(Sec) with serine, to form the misacylated tRNA L-seryl-tRNA(Sec), which will be further converted into selenocysteinyl-tRNA(Sec). This Xanthomonas campestris pv. campestris (strain 8004) protein is Serine--tRNA ligase.